A 400-amino-acid chain; its full sequence is MTVQQAFEQHVMHTYARFSVVFERGEGCYLEDSEGRRYLDFVAGIATCVLGHAHPVLSAAVAEQARTLIHVSNLYYTPQQACLAEWLTAHSAADQVFFCNSGAEANEGAIKLARKYGRTVLGIAEPQIICAHQSFHGRTMATVTATGQPKYQKHFHPLVPGFVHVPYNDFEALRAQVTDATAAVLIEPIQGEGGVVPGDVEFFQKLRRFCSERRILLMLDEVQTGMGRTGRLFGYEHLGIEPDVFTLAKALGGGVPIGALCAKEAFAIFEPGDHASTFGGNPLACAAALAVCQTLEAEQLVDNARERGAQLAAGLGRLVERFKPLVRTARGRGLMQGLVLSEPRAAEIVRLAMEQGLLLVSAGPEVIRFVPPLIVSAIEVDEALAILEGVFARLPVTVTA.

Pyridoxal 5'-phosphate is bound by residues 102–103 (GA) and F135. Residue R138 coordinates N(2)-acetyl-L-ornithine. 220 to 223 (DEVQ) is a binding site for pyridoxal 5'-phosphate. An N6-(pyridoxal phosphate)lysine modification is found at K249. S276 provides a ligand contact to N(2)-acetyl-L-ornithine. Residue T277 participates in pyridoxal 5'-phosphate binding.

It belongs to the class-III pyridoxal-phosphate-dependent aminotransferase family. ArgD subfamily. In terms of assembly, homodimer. Requires pyridoxal 5'-phosphate as cofactor.

The protein localises to the cytoplasm. It carries out the reaction N(2)-acetyl-L-ornithine + 2-oxoglutarate = N-acetyl-L-glutamate 5-semialdehyde + L-glutamate. The protein operates within amino-acid biosynthesis; L-arginine biosynthesis; N(2)-acetyl-L-ornithine from L-glutamate: step 4/4. The chain is Acetylornithine aminotransferase from Gloeobacter violaceus (strain ATCC 29082 / PCC 7421).